A 399-amino-acid chain; its full sequence is Phosphomevalonate dehydratase large subunit (399 aa).

5 residues coordinate (R)-5-phosphomevalonate: Gly-54, Val-55, Ser-56, Asn-85, and Pro-86. Cys-125 provides a ligand contact to [4Fe-4S] cluster. Glu-144 and Ser-145 together coordinate (R)-5-phosphomevalonate. Positions 298 and 355 each coordinate [4Fe-4S] cluster. Residue Lys-375 coordinates (R)-5-phosphomevalonate.

It belongs to the AcnX type II large subunit family. In terms of assembly, heterodimer composed of a large subunit (PMDh-L) and a small subunit (PMDh-S). Requires [4Fe-4S] cluster as cofactor.

It catalyses the reaction (R)-5-phosphomevalonate = (2E)-3-methyl-5-phosphooxypent-2-enoate + H2O. Its pathway is isoprenoid biosynthesis; isopentenyl diphosphate biosynthesis via mevalonate pathway. In terms of biological role, component of a hydro-lyase that catalyzes the dehydration of mevalonate 5-phosphate (MVA5P) to form trans-anhydromevalonate 5-phosphate (tAHMP). Involved in the archaeal mevalonate (MVA) pathway, which provides fundamental precursors for isoprenoid biosynthesis, such as isopentenyl diphosphate (IPP) and dimethylallyl diphosphate (DMAPP). The chain is Phosphomevalonate dehydratase large subunit from Methanothermobacter thermautotrophicus (strain ATCC 29096 / DSM 1053 / JCM 10044 / NBRC 100330 / Delta H) (Methanobacterium thermoautotrophicum).